The sequence spans 445 residues: Glutamate--tRNA ligase 1 (445 aa).

The 'HIGH' region motif lies at 10-20; sequence PSPTGMLHVGN. The short motif at 240–244 is the 'KMSKS' region element; that stretch reads KISKR. An ATP-binding site is contributed by Lys-243.

This sequence belongs to the class-I aminoacyl-tRNA synthetase family. Glutamate--tRNA ligase type 1 subfamily. In terms of assembly, monomer.

It is found in the cytoplasm. It carries out the reaction tRNA(Glu) + L-glutamate + ATP = L-glutamyl-tRNA(Glu) + AMP + diphosphate. In terms of biological role, catalyzes the attachment of glutamate to tRNA(Glu) in a two-step reaction: glutamate is first activated by ATP to form Glu-AMP and then transferred to the acceptor end of tRNA(Glu). This Rickettsia bellii (strain OSU 85-389) protein is Glutamate--tRNA ligase 1.